The chain runs to 402 residues: NADH-quinone oxidoreductase subunit D (402 aa).

Belongs to the complex I 49 kDa subunit family. In terms of assembly, NDH-1 is composed of 14 different subunits. Subunits NuoB, C, D, E, F, and G constitute the peripheral sector of the complex.

It localises to the cell inner membrane. The enzyme catalyses a quinone + NADH + 5 H(+)(in) = a quinol + NAD(+) + 4 H(+)(out). In terms of biological role, NDH-1 shuttles electrons from NADH, via FMN and iron-sulfur (Fe-S) centers, to quinones in the respiratory chain. The immediate electron acceptor for the enzyme in this species is believed to be ubiquinone. Couples the redox reaction to proton translocation (for every two electrons transferred, four hydrogen ions are translocated across the cytoplasmic membrane), and thus conserves the redox energy in a proton gradient. The polypeptide is NADH-quinone oxidoreductase subunit D (Rhodopseudomonas palustris (strain TIE-1)).